A 1854-amino-acid polypeptide reads, in one-letter code: Calcium-channel protein cch1 (1854 aa).

The span at 1–15 (MSSSSNSDPSSSPDN) shows a compositional bias: low complexity. The disordered stretch occupies residues 1–33 (MSSSSNSDPSSSPDNTDFIPLKDNPKDTSSYIN). Asparagine 40 is a glycosylation site (N-linked (GlcNAc...) asparagine). The next 3 helical transmembrane spans lie at 184 to 204 (HPLY…LLMI), 220 to 240 (IIVI…LFGF), and 274 to 294 (DFVA…QGIF). Asparagine 310 carries an N-linked (GlcNAc...) asparagine glycan. 8 consecutive transmembrane segments (helical) span residues 328–348 (PLVQ…ILGV), 427–447 (FFNS…TDIM), 461–481 (LFII…IAVV), 514–534 (YLFY…VTLC), 549–569 (LIFY…RFFA), 581–601 (YTNL…LPSI), 606–626 (VAFG…ILLI), and 642–662 (QLLN…LCAV). Asparagine 699 carries an N-linked (GlcNAc...) asparagine glycan. Residues 723–743 (FFTLWFLFSNNVVLSMFIAVI) form a helical membrane-spanning segment. An N-linked (GlcNAc...) asparagine glycan is attached at asparagine 786. The next 3 membrane-spanning stretches (helical) occupy residues 946–966 (VFIY…TPIY), 980–1000 (FVWT…IKII), and 1021–1041 (FFVL…HALL). Asparagine 1058 carries an N-linked (GlcNAc...) asparagine glycan. 2 helical membrane passes run 1075–1095 (FFKI…FALW) and 1148–1168 (FPHA…VDIM). The N-linked (GlcNAc...) asparagine glycan is linked to asparagine 1184. 4 helical membrane-spanning segments follow: residues 1193-1213 (FVLF…AIII), 1274-1294 (FTGL…PCPI), 1302-1322 (SIFL…VYGL), and 1331-1351 (FWNM…IAIL). N-linked (GlcNAc...) asparagine glycosylation is present at asparagine 1356. Helical transmembrane passes span 1358 to 1378 (SLTL…IPKF), 1393 to 1413 (PSIF…AIAF), and 1486 to 1506 (FIAW…TVVF). Asparagine 1508 and asparagine 1773 each carry an N-linked (GlcNAc...) asparagine glycan. A disordered region spans residues 1764–1792 (TIASGEGDDNHSVEDHLKVPTDNEPRRSP). The span at 1771 to 1790 (DDNHSVEDHLKVPTDNEPRR) shows a compositional bias: basic and acidic residues.

The protein belongs to the calcium channel alpha-1 subunit (TC 1.A.1.11) family. As to quaternary structure, interacts with yam8 to form a Ca(2+) influx channel.

The protein resides in the cell membrane. Voltage-gated, high-affinity calcium channel that functions together with yam8 to mediate calcium entry into cells. Required during conditions of environmental stress. This is Calcium-channel protein cch1 (cch1) from Schizosaccharomyces pombe (strain 972 / ATCC 24843) (Fission yeast).